The chain runs to 377 residues: Terpene synthase 1 (377 aa).

Residues 81–86 (DDALDA) carry the DDxx(x)D/E motif motif. Positions 221–229 (NDLVSYEKE) match the NDxxSxxxD/E motif motif. A disordered region spans residues 326–359 (RKQSSSPNLTNSISIPTNNTNNSNNITSSPNKKQ). A compositionally biased stretch (low complexity) spans 335 to 356 (TNSISIPTNNTNNSNNITSSPN).

It belongs to the terpene synthase family.

It carries out the reaction (2E,6E)-farnesyl diphosphate = (2S,3R,6S,9S)-(-)-protoillud-7-ene + diphosphate. Terpene synthase that converts its substrate farnesyl diphosphate (FPP) into the sesquiterpene protoillud-7-ene. The polypeptide is Terpene synthase 1 (Dictyostelium purpureum (Slime mold)).